The following is a 185-amino-acid chain: Capsid protein (185 aa).

The segment at 136 to 185 (NAPILSTLPETTVVRRRDRGRSPRRRTPSPRRRRSQSPRRRRSQSRESQC) is disordered. Positions 149 to 178 (VRRRDRGRSPRRRTPSPRRRRSQSPRRRRS) are enriched in basic residues. Phosphoserine; by host is present on residues Ser-157, Ser-164, and Ser-172. The 1; half-length repeat unit spans residues 157–163 (SPRRRTP). A 3 X 8 AA repeats of S-P-R-R-R-[PR]-S-Q region spans residues 157–179 (SPRRRTPSPRRRRSQSPRRRRSQ). The Bipartite nuclear localization signal signature appears at 160–177 (RRTPSPRRRRSQSPRRRR). 2 tandem repeats follow at residues 164–171 (SPRRRRSQ) and 172–179 (SPRRRRSQ). The interval 179 to 185 (QSRESQC) is RNA binding.

The protein belongs to the orthohepadnavirus core antigen family. As to quaternary structure, homodimerizes, then multimerizes. Interacts with cytosol exposed regions of viral L glycoprotein present in the reticulum-to-Golgi compartment. Interacts with human FLNB. Phosphorylated form interacts with host importin alpha; this interaction depends on the exposure of the NLS, which itself depends upon genome maturation and/or phosphorylation of the capsid protein. Interacts with host NUP153. Post-translationally, phosphorylated by host SRPK1, SRPK2, and maybe protein kinase C or GAPDH. Phosphorylation is critical for pregenomic RNA packaging. Protein kinase C phosphorylation is stimulated by HBx protein and may play a role in transport of the viral genome to the nucleus at the late step during the viral replication cycle.

The protein localises to the virion. It localises to the host cytoplasm. Its function is as follows. Self assembles to form an icosahedral capsid. Most capsids appear to be large particles with an icosahedral symmetry of T=4 and consist of 240 copies of capsid protein, though a fraction forms smaller T=3 particles consisting of 180 capsid proteins. Entering capsids are transported along microtubules to the nucleus. Phosphorylation of the capsid is thought to induce exposure of nuclear localization signal in the C-terminal portion of the capsid protein that allows binding to the nuclear pore complex via the importin (karyopherin-) alpha and beta. Capsids are imported in intact form through the nuclear pore into the nuclear basket, where it probably binds NUP153. Only capsids that contain the mature viral genome can release the viral DNA and capsid protein into the nucleoplasm. Immature capsids get stuck in the basket. Capsids encapsulate the pre-genomic RNA and the P protein. Pre-genomic RNA is reverse-transcribed into DNA while the capsid is still in the cytoplasm. The capsid can then either be directed to the nucleus, providing more genomes for transcription, or bud through the endoplasmic reticulum to provide new virions. The protein is Capsid protein of Hepatitis B virus genotype A1 subtype adw (isolate Philippines/pFDW294/1988) (HBV-A).